The chain runs to 503 residues: MSIKAEEISALIKQQLEKYDDKLNVNEVGTVTYVGDGIARAHGLNNVLSSELLQFSNGSYGIAQNLEANDVGIIILGRFDDIREGDQVKRTGRIMEVPVGDQLIGRVVNPLGQPVDGLGEIKTDKTRPIESKAPGVMDRQSVNQPLQTGIKAIDALVPIGRGQRELIIGDRKTGKTALALDTIINQKGQDVICIYVAIGQKESTVKNSVETLKRFGAMDYTIVVEAGPSEPAPMLYIAPYAGTAMGEEFMYNGKDVLIVFDDLSKQAVAYREISLLLRRPPGREAYPGDVFYLHSRLLERSAKLNKKLGGGSMTALPFIQTQAGDISAYIPTNVISITDGQIFLEADLFFAGTRPAINAGESVSRVGGSAQIKAMKKVAGTLRVDLASYRELESFAQFGSDLDQATQAKLNRGRRTVEVLKQPLHKPLPVEDEVLILYALTHGFLDAIPVPDIQRYELELYDYFASNYNDLLDVIRTTGDLPEEDKLNEALKNFNEGFSISKK.

169–176 (GDRKTGKT) contacts ATP.

This sequence belongs to the ATPase alpha/beta chains family. As to quaternary structure, F-type ATPases have 2 components, CF(1) - the catalytic core - and CF(0) - the membrane proton channel. CF(1) has five subunits: alpha(3), beta(3), gamma(1), delta(1), epsilon(1). CF(0) has three main subunits: a(1), b(2) and c(9-12). The alpha and beta chains form an alternating ring which encloses part of the gamma chain. CF(1) is attached to CF(0) by a central stalk formed by the gamma and epsilon chains, while a peripheral stalk is formed by the delta and b chains.

It localises to the cell membrane. The catalysed reaction is ATP + H2O + 4 H(+)(in) = ADP + phosphate + 5 H(+)(out). In terms of biological role, produces ATP from ADP in the presence of a proton gradient across the membrane. The alpha chain is a regulatory subunit. The chain is ATP synthase subunit alpha from Lactobacillus johnsonii (strain CNCM I-12250 / La1 / NCC 533).